We begin with the raw amino-acid sequence, 779 residues long: Abnormal cell migration protein 10 (779 aa).

Acidic residues predominate over residues 78-97 (NELEADTEEDIAETADDEES). 3 disordered regions span residues 78 to 105 (NELEADTEEDIAETADDEESKDPVEKTE), 189 to 217 (SSSRENVKSISTLPPPPPALSYHQTPQQP), and 242 to 302 (AASS…NAEE). Positions 189 to 200 (SSSRENVKSIST) are enriched in polar residues. The span at 242-254 (AASSCSSPDGDSA) shows a compositional bias: low complexity. The segment covering 256 to 293 (GDSSSTESSNNRCRNSAFSSNDSCRDSLNTPSPTQVSP) has biased composition (polar residues). Positions 317 to 407 (EAKVTKIFVK…NKLYFMRRPD (91 aa)) constitute a Ras-associating domain. Residues 456–566 (PPEMEGFLYL…WLVALRIAKN (111 aa)) enclose the PH domain. 2 stretches are compositionally biased toward polar residues: residues 645 to 660 (SFSVNSCQQSHPSRTS) and 688 to 698 (RASTSSPTIPQ). The disordered stretch occupies residues 645–763 (SFSVNSCQQS…SPMAPAKNDL (119 aa)). Residues 708–729 (PAPPPVASVMRMPPPVTPPKPC) are compositionally biased toward pro residues.

Belongs to the MRL family. May interact (via Ras-associating and PH domains) with ced-10 (GTP-bound form).

The protein localises to the perikaryon. Required cell non-autonomously for proper development of the excretory canals and for the long-range anterior-posterior migrations of embryonic neurons CAN, ALM and HSN. Plays a role, probably downstream of ced-10/rac1, in orientating axonal growth of HSN and AVM neurons in response to guidance cues such as slt-1. May regulate growth cone polarization by promoting asymmetric F-actin assembly. May be involved in signal transduction during cell migration. The protein is Abnormal cell migration protein 10 of Caenorhabditis elegans.